The chain runs to 246 residues: Protein phosphatase PhpP (246 aa).

The PPM-type phosphatase domain occupies glutamate 2–methionine 240. Residues aspartate 36, glycine 37, aspartate 192, and aspartate 231 each contribute to the Mn(2+) site.

The protein belongs to the PP2C family. In terms of assembly, interacts with the kinase domain of StkP. Requires Mn(2+) as cofactor.

The protein localises to the cytoplasm. The catalysed reaction is O-phospho-L-seryl-[protein] + H2O = L-seryl-[protein] + phosphate. It carries out the reaction O-phospho-L-threonyl-[protein] + H2O = L-threonyl-[protein] + phosphate. Its activity is regulated as follows. Phosphatase activity is inhibited by NaF but not by okadaic acid. Functionally, protein phosphatase able to dephosphorylate StkP-P and a phosphothreonine residue in a phosphopeptide synthetic substrate. PhpP and its cognate protein kinase StkP appear to constitute a functional signaling couple in vivo, PhpP's primary role probably being to control phosphorylation levels of StkP and of its targets (which include LocZ, DivIVA and KhpB (also called EloR/Jag)). PhpP thus performs an essential control of StkP activity. Overexpression confers an stkP deletion-like phenotype. The sequence is that of Protein phosphatase PhpP (phpP) from Streptococcus pneumoniae.